Consider the following 1156-residue polypeptide: Condensin-2 complex subunit G2 (1156 aa).

Residues 460–498 (MLPALKFCLHDNSEKVRVAFVDMLLKIKAVRAAKFWKIC) form an HEAT repeat. Residues 587-611 (PNEDTEDEDDDEGDGEGIVRGDSEK) form a disordered region. Acidic residues predominate over residues 589–601 (EDTEDEDDDEGDG).

As to quaternary structure, component of the condensin-2 complex, which contains the smc2 and smc4 heterodimer, and three non SMC subunits that probably regulate the complex: ncaph2, ncapd3 and ncapg2.

Its subcellular location is the nucleus. In terms of biological role, regulatory subunit of the condensin-2 complex, a complex which establishes mitotic chromosome architecture and is involved in physical rigidity of the chromatid axis. The protein is Condensin-2 complex subunit G2 (ncapg2) of Xenopus laevis (African clawed frog).